We begin with the raw amino-acid sequence, 306 residues long: Agmatinase (306 aa).

Residues H126, D149, H151, D153, D230, and D232 each contribute to the Mn(2+) site.

The protein belongs to the arginase family. Agmatinase subfamily. Mn(2+) serves as cofactor.

The enzyme catalyses agmatine + H2O = urea + putrescine. It participates in amine and polyamine biosynthesis; putrescine biosynthesis via agmatine pathway; putrescine from agmatine: step 1/1. Its function is as follows. Catalyzes the formation of putrescine from agmatine. This chain is Agmatinase, found in Escherichia coli (strain SE11).